The following is a 152-amino-acid chain: Mitochondrial fission 1 protein (152 aa).

M1 carries the post-translational modification N-acetylmethionine. The Cytoplasmic portion of the chain corresponds to M1–G122. S10 is subject to Phosphoserine. Residues R71–N104 form a TPR repeat. A helical transmembrane segment spans residues L123–I143. Topologically, residues G144 to S152 are mitochondrial intermembrane.

Belongs to the FIS1 family. As to quaternary structure, interacts with DNM1L/DLP1 through the TPR region; may form part of a larger protein complex at the endoplasmic reticulum-mitochondrial interface during mitochondrial fission. Interacts with MARCHF5. Interacts with MIEF1. Interacts with PEX11A, PEX11B and PEX11G. Post-translationally, ubiquitinated by MARCHF5.

Its subcellular location is the mitochondrion outer membrane. It is found in the peroxisome membrane. Its function is as follows. Involved in the fragmentation of the mitochondrial network and its perinuclear clustering. Plays a minor role in the recruitment and association of the fission mediator dynamin-related protein 1 (DNM1L) to the mitochondrial surface and mitochondrial fission. May not be essential for the assembly of functional fission complexes and the subsequent membrane scission event. Also mediates peroxisomal fission. May act when the products of fission are directed toward mitochondrial homeostasis, mitophagy, or apoptosis. Can induce cytochrome c release from the mitochondrion to the cytosol, ultimately leading to apoptosis. The protein is Mitochondrial fission 1 protein of Rattus norvegicus (Rat).